The following is a 293-amino-acid chain: Putative phosphoenolpyruvate synthase regulatory protein (293 aa).

Residue 173-180 coordinates ADP; sequence GVSRCGKT.

This sequence belongs to the pyruvate, phosphate/water dikinase regulatory protein family. PSRP subfamily.

It catalyses the reaction [pyruvate, water dikinase] + ADP = [pyruvate, water dikinase]-phosphate + AMP + H(+). It carries out the reaction [pyruvate, water dikinase]-phosphate + phosphate + H(+) = [pyruvate, water dikinase] + diphosphate. In terms of biological role, bifunctional serine/threonine kinase and phosphorylase involved in the regulation of the phosphoenolpyruvate synthase (PEPS) by catalyzing its phosphorylation/dephosphorylation. This chain is Putative phosphoenolpyruvate synthase regulatory protein, found in Photorhabdus laumondii subsp. laumondii (strain DSM 15139 / CIP 105565 / TT01) (Photorhabdus luminescens subsp. laumondii).